The following is a 264-amino-acid chain: Large ribosomal subunit protein uL2 (264 aa).

Belongs to the universal ribosomal protein uL2 family.

Its subcellular location is the cytoplasm. The protein is Large ribosomal subunit protein uL2 (RPL8) of Tetrahymena thermophila (strain SB210).